The sequence spans 231 residues: Ribosomal RNA small subunit methyltransferase G (231 aa).

Gly-85, Phe-90, and Arg-154 together coordinate S-adenosyl-L-methionine.

Belongs to the methyltransferase superfamily. RNA methyltransferase RsmG family.

Its subcellular location is the cytoplasm. The enzyme catalyses guanosine(527) in 16S rRNA + S-adenosyl-L-methionine = N(7)-methylguanosine(527) in 16S rRNA + S-adenosyl-L-homocysteine. Specifically methylates the N7 position of guanine in position 527 of 16S rRNA. The chain is Ribosomal RNA small subunit methyltransferase G from Rhodopseudomonas palustris (strain BisA53).